Reading from the N-terminus, the 643-residue chain is MNASVEGDTFSGSMQIPGGTTVLVELAPDIHICGLCKQHFSNLDAFVAHKQSGCQLTTTPVTAPSTVQFVAEETEPATQTTTTTISSETQTITVSAPEFVFEHGYQTYLPTESTDNQTATVISLPTKSRTKKPTAPPAQKRLGCCYPGCQFKTAYGMKDMERHLKIHTGDKPHKCEVCGKCFSRKDKLKTHMRCHTGVKPYKCKTCDYAAADSSSLNKHLRIHSDERPFKCQICPYASRNSSQLTVHLRSHTASVLENDVQKPAGLPAEESDAQQAPAVTLSLEAKERTATLGERTFNCRYPGCHFKTVHGMKDLDRHLRIHTGDKPHKCEFCDKCFSRKDNLTMHMRCHTSVKPHKCHLCDYAAVDSSSLKKHLRIHSDERPYKCQLCPYASRNSSQLTVHLRSHTGDTPFQCWLCSAKFKISSDLKRHMIVHSGEKPFKCEFCDVRCTMKANLKSHIRIKHTFKCLHCAFQGRDRADLLEHSRLHQADHPEKCPECSYSCSNPAALRVHSRVHCTDRPFKCDFCSFDTKRPSSLAKHIDKVHREGAKTENRAPPGKDGPGESGPHHVPNVSTQRAFGCDKCGASFVRDDSLRCHRKQHSDWGENKNSNLVTFPSEGIATGQLGPLVSVGQLESTLEPSHDL.

C2H2-type zinc fingers lie at residues 173–195, 201–223, 229–251, 297–322, 328–350, 356–378, 384–406, 412–434, 440–463, 465–487, and 493–515; these read HKCE…MRCH, YKCK…LRIH, FKCQ…LRSH, FNCR…LRIH, HKCH…LRIH, YKCQ…LRSH, FQCW…MIVH, FKCE…RIKH, FKCL…SRLH, and EKCP…SRVH. Residues cysteine 495, cysteine 498, histidine 511, histidine 515, cysteine 523, cysteine 526, histidine 539, and histidine 544 each coordinate Zn(2+). Basic and acidic residues predominate over residues 538 to 552; that stretch reads KHIDKVHREGAKTEN. The disordered stretch occupies residues 538–571; that stretch reads KHIDKVHREGAKTENRAPPGKDGPGESGPHHVPN. The segment at 578 to 600 adopts a C2H2-type 12 zinc-finger fold; it reads FGCDKCGASFVRDDSLRCHRKQH.

The protein belongs to the krueppel C2H2-type zinc-finger protein family. As to quaternary structure, interacts with NOTCH1. In terms of tissue distribution, widely expressed. Expressed in the brain, spleen, liver, and heart.

The protein localises to the nucleus. May be involved in the regulation of mesenchymal cell differentiation through transactivation of NOTCH1 target genes. This chain is Zinc finger protein 64, found in Mus musculus (Mouse).